Here is a 518-residue protein sequence, read N- to C-terminus: uncharacterized protein (518 aa).

2 consecutive ABC transporter domains span residues 4-260 (LSVK…QLEA) and 324-518 (LIFE…TKVL). Residues 36 to 43 (GANGEGKS) and 357 to 364 (GANGIGKT) contribute to the ATP site.

The protein belongs to the ABC transporter superfamily.

This is an uncharacterized protein from Bacillus subtilis (strain 168).